The sequence spans 346 residues: Small ribosomal subunit biogenesis GTPase RsgA (346 aa).

A disordered region spans residues 1–26 (MAKRKLTQNQTRRIQSNNAKTLHRHK). Positions 7-20 (TQNQTRRIQSNNAK) are enriched in polar residues. A CP-type G domain is found at 103–271 (ENEISRPDYY…LIDSPGIREF (169 aa)). Residues 159-162 (NKVD) and 213-221 (GQSGVGKSS) contribute to the GTP site. Zn(2+)-binding residues include C295, C300, H302, and C308.

This sequence belongs to the TRAFAC class YlqF/YawG GTPase family. RsgA subfamily. Monomer. Associates with 30S ribosomal subunit, binds 16S rRNA. Requires Zn(2+) as cofactor.

It localises to the cytoplasm. Its function is as follows. One of several proteins that assist in the late maturation steps of the functional core of the 30S ribosomal subunit. Helps release RbfA from mature subunits. May play a role in the assembly of ribosomal proteins into the subunit. Circularly permuted GTPase that catalyzes slow GTP hydrolysis, GTPase activity is stimulated by the 30S ribosomal subunit. In Haemophilus influenzae (strain PittEE), this protein is Small ribosomal subunit biogenesis GTPase RsgA.